Reading from the N-terminus, the 494-residue chain is uncharacterized protein (494 aa).

This is an uncharacterized protein from Magallana gigas (Pacific oyster).